The chain runs to 174 residues: MTYALFLLSVILVMGFVGFSSKPSPIYGGLVLIISGAVGCAVILNCGGGYMGLMVFLIYLGGMMVVFGYTTAMAIEEYPEAWGSGVEVLVSVLVGLVMEVGLVLWVKEYDGVVVVVNFNSVGSWMIYEGEGSGLIREDPIGAGALYDYGRWLVVVTGWTLFVGVYVVIEIARGN.

Transmembrane regions (helical) follow at residues 1-21, 24-44, 47-67, 86-106, 111-131, and 151-171; these read MTYALFLLSVILVMGFVGFSS, SPIYGGLVLIISGAVGCAVIL, GGGYMGLMVFLIYLGGMMVVF, VEVLVSVLVGLVMEVGLVLWV, GVVVVVNFNSVGSWMIYEGEG, and WLVVVTGWTLFVGVYVVIEIA.

Belongs to the complex I subunit 6 family. In terms of assembly, core subunit of respiratory chain NADH dehydrogenase (Complex I) which is composed of 45 different subunits.

It is found in the mitochondrion inner membrane. The enzyme catalyses a ubiquinone + NADH + 5 H(+)(in) = a ubiquinol + NAD(+) + 4 H(+)(out). Its function is as follows. Core subunit of the mitochondrial membrane respiratory chain NADH dehydrogenase (Complex I) which catalyzes electron transfer from NADH through the respiratory chain, using ubiquinone as an electron acceptor. Essential for the catalytic activity and assembly of complex I. This chain is NADH-ubiquinone oxidoreductase chain 6 (MT-ND6), found in Pongo abelii (Sumatran orangutan).